Consider the following 726-residue polypeptide: E3 SUMO-protein ligase SIZ2 (726 aa).

An SAP domain is found at 43–77 (MEQLKVLELKQICKSLDLSITGKKAVLQDRIKQFL). The region spanning 139–291 (TALPPYSQQQ…SISCFIVEVF (153 aa)) is the PINIT domain. An SP-RING-type zinc finger spans residues 323 to 408 (DDDDIITTST…IQNCNEDVEQ (86 aa)). Cysteine 354, histidine 356, cysteine 377, and cysteine 380 together coordinate Zn(2+). A disordered region spans residues 507–533 (PSESEGSSDYNPNHTSTPKGSPTMDQD). Over residues 510–533 (SEGSSDYNPNHTSTPKGSPTMDQD) the composition is skewed to polar residues.

It belongs to the PIAS family. In terms of assembly, interacts with CDC12. Post-translationally, autosumoylated upon ethanol stress.

It localises to the nucleus. It participates in protein modification; protein sumoylation. In terms of biological role, may act as an E3 ligase mediating SUMO/Smt3 attachment to septins. May be involved in chromosome maintenance. In Saccharomyces cerevisiae (strain ATCC 204508 / S288c) (Baker's yeast), this protein is E3 SUMO-protein ligase SIZ2 (NFI1).